A 328-amino-acid polypeptide reads, in one-letter code: Methionyl-tRNA formyltransferase (328 aa).

110–113 (SLLP) serves as a coordination point for (6S)-5,6,7,8-tetrahydrofolate.

Belongs to the Fmt family.

It carries out the reaction L-methionyl-tRNA(fMet) + (6R)-10-formyltetrahydrofolate = N-formyl-L-methionyl-tRNA(fMet) + (6S)-5,6,7,8-tetrahydrofolate + H(+). Its function is as follows. Attaches a formyl group to the free amino group of methionyl-tRNA(fMet). The formyl group appears to play a dual role in the initiator identity of N-formylmethionyl-tRNA by promoting its recognition by IF2 and preventing the misappropriation of this tRNA by the elongation apparatus. The polypeptide is Methionyl-tRNA formyltransferase (Prochlorococcus marinus (strain MIT 9312)).